The chain runs to 866 residues: Putative linoleate 9S-lipoxygenase 3 (866 aa).

The PLAT domain maps to 33 to 161 (NDFGATVIDG…KYRYDRVFFA (129 aa)). The 703-residue stretch at 164–866 (AYLPSQMPAA…AKGIPNSISI (703 aa)) folds into the Lipoxygenase domain. A disordered region spans residues 206–250 (YNDLGSPDSGNPRPILGGSPDTPYPRRGRTGRKPTTTDPDSESRL). The Fe cation site is built by histidine 521, histidine 526, histidine 712, asparagine 716, and isoleucine 866.

It belongs to the lipoxygenase family. Fe cation serves as cofactor.

It catalyses the reaction (9Z,12Z)-octadecadienoate + O2 = (9S)-hydroperoxy-(10E,12Z)-octadecadienoate. The protein operates within lipid metabolism; oxylipin biosynthesis. Functionally, plant lipoxygenase may be involved in a number of diverse aspects of plant physiology including growth and development, pest resistance, and senescence or responses to wounding. Catalyzes the hydroperoxidation of lipids containing a cis,cis-1,4-pentadiene structure. This chain is Putative linoleate 9S-lipoxygenase 3, found in Oryza sativa subsp. japonica (Rice).